The sequence spans 222 residues: Germin-like protein 11-1 (222 aa).

Residues 1-23 (MKLSTVLCCYLLLLGLFAPEIIS) form the signal peptide. A disulfide bond links cysteine 32 and cysteine 49. The Cupin type-1 domain maps to 72 to 195 (DNMVRSSANI…AMFAPDSEVA (124 aa)). Residues histidine 111, histidine 113, glutamate 118, and histidine 157 each contribute to the Mn(2+) site.

It belongs to the germin family. Oligomer (believed to be a pentamer but probably hexamer).

It localises to the secreted. The protein localises to the extracellular space. Its subcellular location is the apoplast. In terms of biological role, may play a role in plant defense. Probably has no oxalate oxidase activity even if the active site is conserved. The polypeptide is Germin-like protein 11-1 (Oryza sativa subsp. japonica (Rice)).